Consider the following 550-residue polypeptide: Solute carrier family 22 member 6 (550 aa).

The Cytoplasmic portion of the chain corresponds to 1-9; that stretch reads MAFNDLLQQ. Residues 10 to 30 form a helical membrane-spanning segment; that stretch reads VGGVGRFQQIQVTLVVLPLLL. At 31–135 the chain is on the extracellular side; sequence MASHNTLQNF…LVCSHRALRQ (105 aa). N-linked (GlcNAc...) asparagine glycosylation is found at N39, N92, and N113. Residues 136–156 traverse the membrane as a helical segment; sequence LAQSLYMVGVLLGAMVFGYLA. Over 157 to 164 the chain is Cytoplasmic; the sequence is DRLGRRKV. The helical transmembrane segment at 165 to 187 threads the bilayer; the sequence is LILNYLQTAVSGTCTAFAPNFSI. The Extracellular segment spans residues 188–195; that stretch reads YCAFRLLS. Residues 196 to 216 traverse the membrane as a helical segment; that stretch reads GMSLAGISLNCMTLNVEWMPI. Over 217 to 224 the chain is Cytoplasmic; sequence HTRACVGT. The helical transmembrane segment at 225 to 245 threads the bilayer; sequence LIGYVYSLGQFLLAGVAYAVP. Topologically, residues 246 to 248 are extracellular; sequence HWR. The helical transmembrane segment at 249 to 269 threads the bilayer; the sequence is HLQLLVSAPFFAFFIYSWFFI. The Cytoplasmic portion of the chain corresponds to 270–337; the sequence is ESARWHSSSG…ELLRCPTLRH (68 aa). Residues 338–358 traverse the membrane as a helical segment; it reads LFLCLSMLWFATSFAYYGLVM. Residues 359 to 368 lie on the Extracellular side of the membrane; the sequence is DLQGFGVSIY. Residues 369-389 form a helical membrane-spanning segment; sequence LIQVIFGAVDLPAKLVGFLVI. Topologically, residues 390–395 are cytoplasmic; that stretch reads NSLGRR. Residues 396–416 form a helical membrane-spanning segment; it reads PAQMAALLLAGICILLNGVIP. The Extracellular segment spans residues 417–420; sequence QDQS. A helical membrane pass occupies residues 421–444; the sequence is IVRTSLAVPGKGCLAASFNCIFLY. The Cytoplasmic portion of the chain corresponds to 445-455; the sequence is TGELYPTMIRQ. Residues 456 to 475 traverse the membrane as a helical segment; that stretch reads TGMGMGSTMARVGSIVSPLV. At 476–484 the chain is on the extracellular side; that stretch reads SMTAELYPS. The helical transmembrane segment at 485-505 threads the bilayer; that stretch reads MPLFIYGAVPVAASAVTVLLP. The Cytoplasmic portion of the chain corresponds to 506 to 550; the sequence is ETLGQPLPDTVQDLESRKGKQTRQQQEHQKYMVPLQASAQEKNGL. The disordered stretch occupies residues 514–550; that stretch reads DTVQDLESRKGKQTRQQQEHQKYMVPLQASAQEKNGL.

Belongs to the major facilitator (TC 2.A.1) superfamily. Organic cation transporter (TC 2.A.1.19) family. Glycosylated. Glycosylation is necessary for proper targeting of the transporter to the plasma membrane.

It is found in the cell membrane. It catalyses the reaction prostaglandin F2alpha(out) = prostaglandin F2alpha(in). The enzyme catalyses prostaglandin E2(out) = prostaglandin E2(in). In terms of biological role, involved in the renal elimination of endogenous and exogenous organic anions. Functions as organic anion exchanger when the uptake of one molecule of organic anion is coupled with an efflux of one molecule of endogenous dicarboxylic acid (glutarate, ketoglutarate, etc). Mediates the transport of prostaglandin E2 (PGE2) and prostaglandin F2-alpha (PGF2-alpha) and may be involved in their renal excretion. Also mediates the sodium-independent uptake of p-aminohippurate (PAH), 2,3-dimercapto-1-propanesulfonic acid (DMPS), cidofovir, adefovir, 9-(2-phosphonylmethoxyethyl) guanine (PMEG), 9-(2-phosphonylmethoxyethyl) diaminopurine (PMEDAP), ochratoxin (OTA), acyclovir (ACV), 3'-azido-3-'deoxythymidine (AZT), cimetidine (CMD), 2,4-dichloro-phenoxyacetate (2,4-D), hippurate (HA), indoleacetate (IA), indoxyl sulfate (IS) and 3-carboxy-4-methyl-5-propyl-2-furanpropionate (CMPF) and edaravone sulfate. PAH uptake is inhibited by p-chloromercuribenzenesulphonate (PCMBS), diethyl pyrocarbonate (DEPC), indomethacin, sulindac, diclofenac, carprofen, okadaic acid, benzothiazolylcysteine (BTC), S-chlorotrifluoroethylcysteine (CTFC), cysteine S-conjugates S-dichlorovinylcysteine (DCVC), furosemide, steviol, phorbol 12-myristate 13-acetate (PMA), calcium ionophore A23187, benzylpenicillin, bumetamide, losartan, probenecid, phenol red, urate, glutarate and alpha-ketoglutarate. The chain is Solute carrier family 22 member 6 (SLC22A6) from Pongo abelii (Sumatran orangutan).